The following is a 430-amino-acid chain: Type 3 secretion system ATPase (430 aa).

162–167 (GCGKTF) contributes to the ATP binding site.

Belongs to the ATPase alpha/beta chains family. T3SS ATPase subfamily. In terms of assembly, the core secretion machinery of the T3SS is composed of approximately 20 different proteins, including cytoplasmic components, a base, an export apparatus and a needle. This subunit is part of the cytosolic complex. Forms homohexamers. Interacts directly with MxiN/SctL (stator protein) and Spa13/SctO (stalk protein). Can form a soluble complex with Spa33/SctQ, MxiN/SctL and MxiK/SctK.

It is found in the cytoplasm. It carries out the reaction ATP + H2O + cellular proteinSide 1 = ADP + phosphate + cellular proteinSide 2.. With respect to regulation, oligomerization increases ATPase activity. Monomeric forms exhibit low-level ATPase activity by forming short-lived oligomers with active site contributions from at least two protomers. In contrast, oligomers exhibit enhanced ATP hydrolysis rates that likely result from multiple preformed active sites within the oligomeric complex. Oligomerization is important for both enzyme activation and T3SS function. Activity is regulated by MxiN/SctL, which differentially regulates the activity of the monomer and the oligomer: it up-regulates the ATPase activity of the monomer, while it down-regulates the activity of the oligomer. Functionally, ATPase component of the type III secretion system (T3SS), also called injectisome, which is used to inject bacterial effector proteins into eukaryotic host cells. Acts as a molecular motor to provide the energy that is required for the export of proteins. Required for type III secretion apparatus (T3SA) formation, proper protein secretion, host cell invasion and virulence. May play a critical role in T3SS substrate recognition, disassembly of the effector/chaperone complex and unfolding of the effector in an ATP-dependent manner prior to secretion. This is Type 3 secretion system ATPase from Shigella flexneri.